The following is a 526-amino-acid chain: Acid-sensing ion channel 1 (526 aa).

At 1-49 (MELKTEEEEVGGVQPVSIQAFASSSTLHGLAHIFSYERLSLKRALWALC) the chain is on the cytoplasmic side. The helical transmembrane segment at 50–66 (FLGSLAVLLCVCTERVQ) threads the bilayer. Topologically, residues 67 to 425 (YYFCYHHVTK…ETIEQKKAYE (359 aa)) are extracellular. Cystine bridges form between cysteine 93/cysteine 194, cysteine 172/cysteine 179, cysteine 290/cysteine 365, cysteine 308/cysteine 361, cysteine 312/cysteine 359, cysteine 321/cysteine 343, and cysteine 323/cysteine 335. 2 N-linked (GlcNAc...) asparagine glycosylation sites follow: asparagine 366 and asparagine 393. A discontinuously helical membrane pass occupies residues 426 to 456 (IAGLLGDIGGQMGLFIGASILTVLELFDYAY). The GAS motif; ion selectivity filter signature appears at 442-444 (GAS). Residues 457–526 (EVIKHRLCRR…ARGTFEDFTC (70 aa)) lie on the Cytoplasmic side of the membrane. Position 477 is a phosphoserine; by PKA (serine 477). Phosphoserine is present on serine 497.

The protein belongs to the amiloride-sensitive sodium channel (TC 1.A.6) family. ASIC1 subfamily. In terms of assembly, homotrimer. Heterotrimer; with other ASIC proteins producing channel with different properties. Interacts with PICK1; regulates ASIC1 clustering in membranes. Interacts with STOM; alters heterotrimeric ASIC channels activity. In terms of processing, pH-gating could be regulated by serine proteases. Phosphorylation by PKA regulates interaction with PICK1 and subcellular localization. Phosphorylation by PKC may regulate the channel. In terms of tissue distribution, expressed in brain areas receiving strong excitatory corticofugal input. In hippocampus, expressed in the hilus of the dentate gyrus. In the cerebral cortex expressed in anterior and posterior cingulate cortex, sensory and motor cortices. In the sensory cortex strongest expression is detected in the whisker barrel field. In sensorimotor and cingulate cortex expression is elevated in layer III. Also expressed in basal ganglia, striatum, ventral pallidum, olfactory tubercle, and nucleus accumbens. Weakly expressed in thalamus with the exception of the habenula and the medial septal nuclei. In olfactory bulb, preferentially expressed in the glomerular layer, within glomeruli. Expressed in cerebellum in the molecular and granule cell layers. Strongly expressed in amygdala complex, particularly in the lateral and basolateral nuclei. Isoform 1 is more abundant in brain compared to isoform 2 (at protein level). Expressed in the nodose ganglion and dorsal root ganglion. Expressed in dendritic spine cells.

It is found in the cell membrane. It localises to the postsynaptic cell membrane. Its subcellular location is the cell projection. The protein localises to the dendrite. The catalysed reaction is Na(+)(in) = Na(+)(out). It carries out the reaction Ca(2+)(in) = Ca(2+)(out). The enzyme catalyses K(+)(in) = K(+)(out). It catalyses the reaction Li(+)(in) = Li(+)(out). With respect to regulation, inhibited by the diuretic drug amiloride. Its activity is regulated as follows. The activity of the channel is sensitive to rapid decrease in osmotic pressure. Its function is as follows. Forms voltage-independent, pH-gated trimeric sodium channels that act as postsynaptic excitatory receptors in the nervous system, playing a crucial role in regulating synaptic plasticity, learning, and memory. Upon extracellular pH drop this channel elicits transient, fast activating, and completely desensitizing inward currents. Displays high selectivity for sodium ions but can also permit the permeation of other cations. Regulates more or less directly intracellular calcium concentration and CaMKII phosphorylation, and thereby the density of dendritic spines. Modulates neuronal activity in the circuits underlying innate fear. Has high selectivity for sodium ions but is also potentially permeable to other cations including potassium. Could function in cochlear mechanoelectrical transduction. The sequence is that of Acid-sensing ion channel 1 from Mus musculus (Mouse).